The following is a 380-amino-acid chain: Chaperone protein DnaJ (380 aa).

A J domain is found at 5-72; sequence DYYETLGVAK…QKRAAYDQYG (68 aa). The CR-type zinc finger occupies 140-218; it reads GKDTQIRIPS…CNGAGRIKSN (79 aa). Zn(2+)-binding residues include Cys153, Cys156, Cys170, Cys173, Cys192, Cys195, Cys206, and Cys209. 4 CXXCXGXG motif repeats span residues 153–160, 170–177, 192–199, and 206–213; these read CSTCDGTG, CPTCSGSG, CPSCHGTG, and CTACNGAG. The tract at residues 357–380 is disordered; sequence LKKGGERHSPNAKSWTDRVKDLFK.

This sequence belongs to the DnaJ family. Homodimer. Zn(2+) is required as a cofactor.

The protein localises to the cytoplasm. Participates actively in the response to hyperosmotic and heat shock by preventing the aggregation of stress-denatured proteins and by disaggregating proteins, also in an autonomous, DnaK-independent fashion. Unfolded proteins bind initially to DnaJ; upon interaction with the DnaJ-bound protein, DnaK hydrolyzes its bound ATP, resulting in the formation of a stable complex. GrpE releases ADP from DnaK; ATP binding to DnaK triggers the release of the substrate protein, thus completing the reaction cycle. Several rounds of ATP-dependent interactions between DnaJ, DnaK and GrpE are required for fully efficient folding. Also involved, together with DnaK and GrpE, in the DNA replication of plasmids through activation of initiation proteins. This is Chaperone protein DnaJ from Methylibium petroleiphilum (strain ATCC BAA-1232 / LMG 22953 / PM1).